The sequence spans 268 residues: Protein CONTINUOUS VASCULAR RING 1 (268 aa).

Residues 1 to 70 lie on the Cytoplasmic side of the membrane; it reads MGDEKPVIVM…GWASKKFMTG (70 aa). The interval 21–48 is disordered; that stretch reads IPVADSGDKDDGSSSKPSSSSSASSSSH. The segment covering 34–48 has biased composition (low complexity); that stretch reads SSKPSSSSSASSSSH. The helical transmembrane segment at 71–91 threads the bilayer; sequence CVILLPIAITFYITWWFIHFV. Topologically, residues 92–103 are extracellular; sequence DGFFSPIYAQLG. Residues 104 to 124 traverse the membrane as a helical segment; sequence INVFGFGFLTSIAFIFLVGVF. Residues 125–268 lie on the Cytoplasmic side of the membrane; it reads MSSWLGASVL…LASIDRATSL (144 aa).

Belongs to the plant COV1 protein family. As to expression, mostly expressed in flowers and stems, and, to a lower extent, in roots and leaves.

The protein resides in the membrane. In terms of biological role, involved in the regulation of vascular patterning in the stem, probably by negatively regulating the differentiation of vascular tissue. In Arabidopsis thaliana (Mouse-ear cress), this protein is Protein CONTINUOUS VASCULAR RING 1.